The sequence spans 301 residues: MVRTDRDRWDLATSVGATATMVAAQRALAADPQYALIDDPYAAPLVRAVGIDVYTRLVNGQIPVDVESGFDPARMAEAMACRTRFYDQFFVEATRSGISQVVILASGLDARAYRLDWPAGTVVYEVDMPEVIEFKTLTLADLGAEPTAERRTVAVDLRDDWAAALQAAGFDKDVPSAWSAEGLLVYLPDDAQDALFDNITALSATGSRLAFEFVPDTAVFNDERWRSHHARMSELGFEIDFNDLVYHGQRSHVIDHLARDGWQSASHTAKELHAANGFDYPDDDIAAVFADITYTSAVLGR.

Residues D127 and 156–157 contribute to the S-adenosyl-L-methionine site; that span reads DL.

The protein belongs to the UPF0677 family.

Its function is as follows. Exhibits S-adenosyl-L-methionine-dependent methyltransferase activity. The polypeptide is Putative S-adenosyl-L-methionine-dependent methyltransferase MMAR_4850 (Mycobacterium marinum (strain ATCC BAA-535 / M)).